The primary structure comprises 386 residues: O-methyltransferase aunE (386 aa).

Trp-200 contributes to the S-adenosyl-L-methionine binding site. Catalysis depends on His-299, which acts as the Proton acceptor.

This sequence belongs to the class I-like SAM-binding methyltransferase superfamily. Cation-independent O-methyltransferase family.

The protein operates within secondary metabolite biosynthesis. Functionally, O-methyltransferase; part of the gene cluster that mediates the biosynthesis of aurasperone B, a dimeric gamma-naphthopyrone. The first step in the biosynthesis of aurasperone B is the production of gamma-naphthopyrone precursor YWA1 by the non-reducing polyketide synthase albA, via condensation of one acetyl-CoA starter unit with 6 malonyl-CoA units. YWA1 is then methylated by aunE at position C-6 to yield foncesin which is further methylated at position C-8 by aunD to produce fonsecin B. A key enzyme in the biosynthetic pathway is the cytochrome P450 monooxygenase aunB which catalyzes the oxidative dimerization of fonsecin B to aurasperone B. AunB also catalyzes the oxidative dimerization of rubrofusarin B into aurasperone A. The polypeptide is O-methyltransferase aunE (Aspergillus niger (strain ATCC MYA-4892 / CBS 513.88 / FGSC A1513)).